The following is a 131-amino-acid chain: Small ribosomal subunit protein uS8 (131 aa).

Belongs to the universal ribosomal protein uS8 family. As to quaternary structure, part of the 30S ribosomal subunit. Contacts proteins S5 and S12.

Functionally, one of the primary rRNA binding proteins, it binds directly to 16S rRNA central domain where it helps coordinate assembly of the platform of the 30S subunit. This Chromobacterium violaceum (strain ATCC 12472 / DSM 30191 / JCM 1249 / CCUG 213 / NBRC 12614 / NCIMB 9131 / NCTC 9757 / MK) protein is Small ribosomal subunit protein uS8.